The primary structure comprises 177 residues: Large ribosomal subunit protein uL6 (177 aa).

It belongs to the universal ribosomal protein uL6 family. As to quaternary structure, part of the 50S ribosomal subunit.

This protein binds to the 23S rRNA, and is important in its secondary structure. It is located near the subunit interface in the base of the L7/L12 stalk, and near the tRNA binding site of the peptidyltransferase center. The polypeptide is Large ribosomal subunit protein uL6 (Rickettsia africae (strain ESF-5)).